The sequence spans 156 residues: Ribonuclease P protein component (156 aa).

Positions 126-156 (GLRKLGVTPGGGRSPAPRAHSGARPRTDARS) are disordered.

Belongs to the RnpA family. In terms of assembly, consists of a catalytic RNA component (M1 or rnpB) and a protein subunit.

The catalysed reaction is Endonucleolytic cleavage of RNA, removing 5'-extranucleotides from tRNA precursor.. Its function is as follows. RNaseP catalyzes the removal of the 5'-leader sequence from pre-tRNA to produce the mature 5'-terminus. It can also cleave other RNA substrates such as 4.5S RNA. The protein component plays an auxiliary but essential role in vivo by binding to the 5'-leader sequence and broadening the substrate specificity of the ribozyme. The chain is Ribonuclease P protein component from Nocardia farcinica (strain IFM 10152).